The following is a 269-amino-acid chain: Zinc transporter ZupT (269 aa).

The next 8 helical transmembrane spans lie at 11 to 31 (IALAVTLAAGLATAIGSLLVL), 40 to 60 (LLAFGLAFAGGAMVYVSLSEI), 80 to 100 (YGTLAFLLGVIVIVLIDHFIP), 125 to 145 (ALLTSIAITAHNFPEGLATFF), 158 to 178 (AFAIAIHNIPEGIAIAVPVYF), 187 to 207 (FSASLLSGLAEPVGAALGYWL), 217 to 237 (FGWVFGLIAGVMVFLALDELL), and 249 to 269 (TVYGLVAGMGTLAISLVLFKW). N136 and E139 together coordinate Fe(2+). Residues E139 and H164 each coordinate Zn(2+). Positions 165, 168, and 197 each coordinate Fe(2+). A Zn(2+)-binding site is contributed by E168.

Belongs to the ZIP transporter (TC 2.A.5) family. ZupT subfamily.

It localises to the cell inner membrane. The enzyme catalyses Zn(2+)(in) = Zn(2+)(out). Functionally, mediates zinc uptake. May also transport other divalent cations. The sequence is that of Zinc transporter ZupT from Stenotrophomonas maltophilia (strain R551-3).